Here is a 223-residue protein sequence, read N- to C-terminus: Probable transaldolase (223 aa).

Lysine 83 functions as the Schiff-base intermediate with substrate in the catalytic mechanism.

It belongs to the transaldolase family. Type 3B subfamily.

The protein localises to the cytoplasm. It catalyses the reaction D-sedoheptulose 7-phosphate + D-glyceraldehyde 3-phosphate = D-erythrose 4-phosphate + beta-D-fructose 6-phosphate. The protein operates within carbohydrate degradation; pentose phosphate pathway; D-glyceraldehyde 3-phosphate and beta-D-fructose 6-phosphate from D-ribose 5-phosphate and D-xylulose 5-phosphate (non-oxidative stage): step 2/3. Transaldolase is important for the balance of metabolites in the pentose-phosphate pathway. The protein is Probable transaldolase of Myxococcus xanthus (strain DK1622).